A 100-amino-acid polypeptide reads, in one-letter code: Small ribosomal subunit protein uS14c (100 aa).

It belongs to the universal ribosomal protein uS14 family. In terms of assembly, part of the 30S ribosomal subunit.

The protein resides in the plastid. Its subcellular location is the chloroplast. Binds 16S rRNA, required for the assembly of 30S particles. The polypeptide is Small ribosomal subunit protein uS14c (Crucihimalaya wallichii (Rock-cress)).